We begin with the raw amino-acid sequence, 177 residues long: Large ribosomal subunit protein uL6 (177 aa).

It belongs to the universal ribosomal protein uL6 family. In terms of assembly, part of the 50S ribosomal subunit.

Its function is as follows. This protein binds to the 23S rRNA, and is important in its secondary structure. It is located near the subunit interface in the base of the L7/L12 stalk, and near the tRNA binding site of the peptidyltransferase center. The protein is Large ribosomal subunit protein uL6 of Neisseria meningitidis serogroup C (strain 053442).